Consider the following 820-residue polypeptide: TORTIFOLIA1-like protein 2 (820 aa).

HEAT repeat units lie at residues 61-98, 102-139, 146-183, 187-224, and 228-265; these read DKVSCFLSCILDTDSEQKSAVRKECIRLMGTLARFHEG, PYLGKMVSSIVKRLKDPDSVVRDACIETMGVLASKMSC, GVFVSLVKPLFEAIGDQNKYVQSGAALCLARVIDSSPE, AIIQRMLMRTVKLLNNSHFIAKPAVIELNRSIILAGGA, and SVLSSAMSSFQDALKNKDWTTRKAASVALMEIAATGEK. Low complexity predominate over residues 304-321; sequence PGSDSPEPSETESSVKES. Disordered regions lie at residues 304 to 325, 357 to 377, and 584 to 644; these read PGSDSPEPSETESSVKESYNGA, PVSARQPPTRYNDDPRKSNQD, and GSTI…GKTG. The segment covering 367–377 has biased composition (basic and acidic residues); sequence YNDDPRKSNQD. Over residues 584-613 the composition is skewed to polar residues; that stretch reads GSTISPRLSSCTSRTSTDIRNRQSTLSTSK.

The chain is TORTIFOLIA1-like protein 2 from Arabidopsis thaliana (Mouse-ear cress).